The chain runs to 573 residues: Urease subunit alpha 2 (573 aa).

Residues 136–573 form the Urease domain; sequence GAIDAHVHLI…LPMAQRYFLF (438 aa). Positions 141, 143, and 224 each coordinate Ni(2+). Lys224 carries the N6-carboxylysine modification. His226 serves as a coordination point for substrate. 2 residues coordinate Ni(2+): His253 and His279. The Proton donor role is filled by His327. Asp367 contacts Ni(2+).

It belongs to the metallo-dependent hydrolases superfamily. Urease alpha subunit family. May form a heterohexamer of 3 UreC (alpha) and 3 UreAB (gamma/beta) subunits. May also form a heterotrimer of UreA (gamma), UreB (beta) and UreC (alpha) subunits. Three heterotrimers associate to form the active enzyme. Requires Ni cation as cofactor. In terms of processing, carboxylation allows a single lysine to coordinate two nickel ions.

It is found in the cytoplasm. It catalyses the reaction urea + 2 H2O + H(+) = hydrogencarbonate + 2 NH4(+). The protein operates within nitrogen metabolism; urea degradation; CO(2) and NH(3) from urea (urease route): step 1/1. In Streptomyces avermitilis (strain ATCC 31267 / DSM 46492 / JCM 5070 / NBRC 14893 / NCIMB 12804 / NRRL 8165 / MA-4680), this protein is Urease subunit alpha 2.